A 358-amino-acid chain; its full sequence is Peroxidase 54 (358 aa).

Positions 1 to 31 are cleaved as a signal peptide; the sequence is MAVTSSSSTCDGFFIISLIVIVSSLFGTSSA. Residue glutamine 32 is modified to Pyrrolidone carboxylic acid. Asparagine 34 and asparagine 44 each carry an N-linked (GlcNAc...) asparagine glycan. Intrachain disulfides connect cysteine 42–cysteine 122, cysteine 75–cysteine 80, cysteine 128–cysteine 330, and cysteine 207–cysteine 239. Histidine 73 (proton acceptor) is an active-site residue. Ca(2+) is bound by residues aspartate 74, valine 77, glycine 79, aspartate 81, and serine 83. N-linked (GlcNAc...) asparagine glycosylation is found at asparagine 103, asparagine 161, and asparagine 166. Position 170 (proline 170) interacts with substrate. Asparagine 178 is a glycosylation site (N-linked (GlcNAc...) asparagine). Position 200 (histidine 200) interacts with heme b. Threonine 201 contacts Ca(2+). 3 N-linked (GlcNAc...) asparagine glycosylation sites follow: asparagine 218, asparagine 228, and asparagine 242. 3 residues coordinate Ca(2+): aspartate 252, threonine 255, and aspartate 260. N-linked (GlcNAc...) asparagine glycosylation occurs at asparagine 298.

This sequence belongs to the peroxidase family. Classical plant (class III) peroxidase subfamily. It depends on heme b as a cofactor. Ca(2+) serves as cofactor.

The protein resides in the secreted. It is found in the vacuole. The catalysed reaction is 2 a phenolic donor + H2O2 = 2 a phenolic radical donor + 2 H2O. Removal of H(2)O(2), oxidation of toxic reductants, biosynthesis and degradation of lignin, suberization, auxin catabolism, response to environmental stresses such as wounding, pathogen attack and oxidative stress. These functions might be dependent on each isozyme/isoform in each plant tissue. This Arabidopsis thaliana (Mouse-ear cress) protein is Peroxidase 54 (PER54).